A 306-amino-acid chain; its full sequence is Ciliary microtubule inner protein 2B (306 aa).

Residues 61 to 92 (QSNPFPPPRDHSFDGGSQELGGRRQHPGDPNL) are disordered.

Belongs to the CIMIP2 family. As to expression, expressed in airway epithelial cells.

Its subcellular location is the cytoplasm. The protein localises to the cytoskeleton. The protein resides in the cilium axoneme. Functionally, microtubule inner protein (MIP) part of the dynein-decorated doublet microtubules (DMTs) in cilia axoneme, which is required for motile cilia beating. This chain is Ciliary microtubule inner protein 2B (cimip2b), found in Xenopus tropicalis (Western clawed frog).